A 242-amino-acid polypeptide reads, in one-letter code: DNA repair protein RecO (242 aa).

The protein belongs to the RecO family.

Involved in DNA repair and RecF pathway recombination. The sequence is that of DNA repair protein RecO from Dechloromonas aromatica (strain RCB).